Consider the following 322-residue polypeptide: Glucokinase (322 aa).

ATP is bound at residue 10–15; it reads GDIGGT.

It belongs to the bacterial glucokinase family.

The protein resides in the cytoplasm. The catalysed reaction is D-glucose + ATP = D-glucose 6-phosphate + ADP + H(+). In Hahella chejuensis (strain KCTC 2396), this protein is Glucokinase.